The sequence spans 278 residues: MSDELSQNFIDGWLGELRLNFALRGGRSVLTRCKHVGPFYVKKVFYSENDNTPHVYLLHPPGGLVGGDKLVLDVKLESDSRVLLTTPGAAKFYRSNGLYSEQKHIFRLERNTALEWVPQSSIFFPKSKAKIDTTFIIEQGSRVISFDMLCFGNLSLGSSTYPEEVDIHLNICLSDSIGLQERLRINELNCVMKLGGFRISALLFAVPSDEKTLYKVRKLITSVKHFQVGGATLLDEILVVRLLGNDNQYLKKMLHHIWYTIRPFIIGKKAMLPRIWLT.

This sequence belongs to the UreD family. In terms of assembly, ureD, UreF and UreG form a complex that acts as a GTP-hydrolysis-dependent molecular chaperone, activating the urease apoprotein by helping to assemble the nickel containing metallocenter of UreC. The UreE protein probably delivers the nickel.

It is found in the cytoplasm. Functionally, required for maturation of urease via the functional incorporation of the urease nickel metallocenter. The sequence is that of Urease accessory protein UreD from Blochmanniella pennsylvanica (strain BPEN).